The primary structure comprises 493 residues: Guanosine-5'-triphosphate,3'-diphosphate pyrophosphatase (493 aa).

The protein belongs to the GppA/Ppx family. GppA subfamily.

It catalyses the reaction guanosine 3'-diphosphate 5'-triphosphate + H2O = guanosine 3',5'-bis(diphosphate) + phosphate + H(+). It participates in purine metabolism; ppGpp biosynthesis; ppGpp from GTP: step 2/2. Functionally, catalyzes the conversion of pppGpp to ppGpp. Guanosine pentaphosphate (pppGpp) is a cytoplasmic signaling molecule which together with ppGpp controls the 'stringent response', an adaptive process that allows bacteria to respond to amino acid starvation, resulting in the coordinated regulation of numerous cellular activities. This is Guanosine-5'-triphosphate,3'-diphosphate pyrophosphatase from Salmonella agona (strain SL483).